Reading from the N-terminus, the 270-residue chain is tRNA pseudouridine synthase A (270 aa).

The Nucleophile role is filled by Asp-60. Tyr-118 contacts substrate.

It belongs to the tRNA pseudouridine synthase TruA family. Homodimer.

The catalysed reaction is uridine(38/39/40) in tRNA = pseudouridine(38/39/40) in tRNA. Functionally, formation of pseudouridine at positions 38, 39 and 40 in the anticodon stem and loop of transfer RNAs. The polypeptide is tRNA pseudouridine synthase A (Salmonella typhimurium (strain LT2 / SGSC1412 / ATCC 700720)).